The primary structure comprises 437 residues: Argininosuccinate lyase (437 aa).

The protein belongs to the lyase 1 family. Argininosuccinate lyase subfamily.

The protein localises to the cytoplasm. The enzyme catalyses 2-(N(omega)-L-arginino)succinate = fumarate + L-arginine. Its pathway is amino-acid biosynthesis; L-arginine biosynthesis; L-arginine from L-ornithine and carbamoyl phosphate: step 3/3. The sequence is that of Argininosuccinate lyase from Clostridium acetobutylicum (strain ATCC 824 / DSM 792 / JCM 1419 / IAM 19013 / LMG 5710 / NBRC 13948 / NRRL B-527 / VKM B-1787 / 2291 / W).